A 422-amino-acid polypeptide reads, in one-letter code: Cyclin-A2 (422 aa).

Methionine 1 is subject to N-acetylmethionine. Positions 1–62 (MPGTSRHSGR…APQQKLKTRR (62 aa)) are disordered. The residue at position 5 (serine 5) is a Phosphoserine.

The protein belongs to the cyclin family. Cyclin AB subfamily. Interacts with the CDK1 and CDK2 protein kinases to form serine/threonine kinase holoenzyme complexes. Interacts with CDK1 (hyperphosphorylated form in G1 and underphosphorylated forms in S and G2). Interacts with CDK2; the interaction increases from G1 to G2. Interacts (associated with CDK2 but not with CDK1) with SCAPER; regulates the activity of CCNA2/CDK2 by transiently maintaining CCNA2 in the cytoplasm. Forms a ternary complex with CDK2 and CDKN1B; CDKN1B inhibits the kinase activity of CDK2 through conformational rearrangements. Interacts with INCA1. In terms of assembly, (Microbial infection) Interacts with mouse cytomegalovirus/MCMV kinase M97; this interaction sequesters CCNA2 to the cytoplasm. In terms of processing, polyubiquitinated via 'Lys-11'-linked ubiquitin by the anaphase-promoting complex (APC/C), leading to its degradation by the proteasome. Deubiquitinated and stabilized by USP37 enables entry into S phase. Ubiquitinated during the G1 phase by the SCF(FBXO31) complex, leading to its proteasomal degradation. In terms of tissue distribution, ubiquitous. In the testis, expressed in germ cells and in the ovary, in both germline and somatic cells.

The protein localises to the nucleus. It is found in the cytoplasm. Functionally, cyclin which controls both the G1/S and the G2/M transition phases of the cell cycle. Functions through the formation of specific serine/threonine kinase holoenzyme complexes with the cyclin-dependent protein kinases CDK1 and CDK2. The cyclin subunit confers the substrate specificity of these complexes and differentially interacts with and activates CDK1 and CDK2 throughout the cell cycle. This is Cyclin-A2 from Mus musculus (Mouse).